The chain runs to 320 residues: Geranylgeranyl pyrophosphate synthase (320 aa).

Lys35, Arg38, and His67 together coordinate isopentenyl diphosphate. Residues Asp74 and Asp78 each coordinate Mg(2+). Arg83 serves as a coordination point for dimethylallyl diphosphate. Residue Arg84 participates in isopentenyl diphosphate binding. Dimethylallyl diphosphate is bound by residues Lys168, Thr169, Gln206, Lys223, and Lys233.

This sequence belongs to the FPP/GGPP synthase family. Mg(2+) is required as a cofactor.

The protein localises to the cytoplasm. The enzyme catalyses isopentenyl diphosphate + dimethylallyl diphosphate = (2E)-geranyl diphosphate + diphosphate. The catalysed reaction is isopentenyl diphosphate + (2E)-geranyl diphosphate = (2E,6E)-farnesyl diphosphate + diphosphate. It catalyses the reaction isopentenyl diphosphate + (2E,6E)-farnesyl diphosphate = (2E,6E,10E)-geranylgeranyl diphosphate + diphosphate. The protein operates within isoprenoid biosynthesis; farnesyl diphosphate biosynthesis; farnesyl diphosphate from geranyl diphosphate and isopentenyl diphosphate: step 1/1. Its pathway is isoprenoid biosynthesis; geranyl diphosphate biosynthesis; geranyl diphosphate from dimethylallyl diphosphate and isopentenyl diphosphate: step 1/1. It participates in isoprenoid biosynthesis; geranylgeranyl diphosphate biosynthesis; geranylgeranyl diphosphate from farnesyl diphosphate and isopentenyl diphosphate: step 1/1. In terms of biological role, catalyzes the trans-addition of the 3 molecules of IPP onto DMAPP to form geranylgeranyl pyrophosphate. May be involved in vesicle trafficking and protein sorting. The protein is Geranylgeranyl pyrophosphate synthase (BTS1) of Eremothecium gossypii (strain ATCC 10895 / CBS 109.51 / FGSC 9923 / NRRL Y-1056) (Yeast).